A 110-amino-acid polypeptide reads, in one-letter code: Plasma membrane ATPase (110 aa).

Asp72 and Asp76 together coordinate Mg(2+). Residues 88–110 (APESTSLNLPNDKELSEIAEQAK) form a disordered region. Positions 98 to 110 (NDKELSEIAEQAK) are enriched in basic and acidic residues.

This sequence belongs to the cation transport ATPase (P-type) (TC 3.A.3) family. Type IIIA subfamily. The N-terminus is blocked.

Its subcellular location is the cell membrane. The catalysed reaction is ATP + H2O + H(+)(in) = ADP + phosphate + 2 H(+)(out). The plasma membrane ATPase of plants and fungi is a hydrogen ion pump. The proton gradient it generates drives the active transport of nutrients by H(+)-symport. The resulting external acidification and/or internal alkinization may mediate growth responses. The chain is Plasma membrane ATPase from Avena sativa (Oat).